The primary structure comprises 253 residues: Carboxy-S-adenosyl-L-methionine synthase (253 aa).

S-adenosyl-L-methionine is bound by residues Tyr-49, 74 to 76 (GCS), 98 to 99 (DN), and Asn-141.

It belongs to the class I-like SAM-binding methyltransferase superfamily. Cx-SAM synthase family.

It catalyses the reaction prephenate + S-adenosyl-L-methionine = carboxy-S-adenosyl-L-methionine + 3-phenylpyruvate + H2O. In terms of biological role, catalyzes the conversion of S-adenosyl-L-methionine (SAM) to carboxy-S-adenosyl-L-methionine (Cx-SAM). The chain is Carboxy-S-adenosyl-L-methionine synthase from Trichodesmium erythraeum (strain IMS101).